A 516-amino-acid polypeptide reads, in one-letter code: Probable serine/threonine-protein kinase ECU02_0550 (516 aa).

One can recognise a Protein kinase domain in the interval 4 to 230 (YKLRQVIGEG…ASEALMHRSF (227 aa)). ATP is bound by residues 10–18 (IGEGASSTV) and Lys-32. Catalysis depends on Asp-120, which acts as the Proton acceptor.

Belongs to the protein kinase superfamily. CAMK Ser/Thr protein kinase family.

The catalysed reaction is L-seryl-[protein] + ATP = O-phospho-L-seryl-[protein] + ADP + H(+). It catalyses the reaction L-threonyl-[protein] + ATP = O-phospho-L-threonyl-[protein] + ADP + H(+). The chain is Probable serine/threonine-protein kinase ECU02_0550 from Encephalitozoon cuniculi (strain GB-M1) (Microsporidian parasite).